Here is a 289-residue protein sequence, read N- to C-terminus: Proteasome subunit beta (289 aa).

A propeptide spans 1–59 (removed in mature form; by autocatalysis); it reads MEHTPRNAGFALPAAYMSTMTSSFIDFLKAEAPDLLPRARVENMPAVPGGGSAFEPPHG. Thr60 (nucleophile) is an active-site residue.

It belongs to the peptidase T1B family. The 20S proteasome core is composed of 14 alpha and 14 beta subunits that assemble into four stacked heptameric rings, resulting in a barrel-shaped structure. The two inner rings, each composed of seven catalytic beta subunits, are sandwiched by two outer rings, each composed of seven alpha subunits. The catalytic chamber with the active sites is on the inside of the barrel. Has a gated structure, the ends of the cylinder being occluded by the N-termini of the alpha-subunits. Is capped by the proteasome-associated ATPase, ARC.

It is found in the cytoplasm. It catalyses the reaction Cleavage of peptide bonds with very broad specificity.. Its pathway is protein degradation; proteasomal Pup-dependent pathway. Its activity is regulated as follows. The formation of the proteasomal ATPase ARC-20S proteasome complex, likely via the docking of the C-termini of ARC into the intersubunit pockets in the alpha-rings, may trigger opening of the gate for substrate entry. Interconversion between the open-gate and close-gate conformations leads to a dynamic regulation of the 20S proteasome proteolysis activity. Its function is as follows. Component of the proteasome core, a large protease complex with broad specificity involved in protein degradation. This is Proteasome subunit beta from Saccharomonospora viridis (strain ATCC 15386 / DSM 43017 / JCM 3036 / CCUG 5913 / NBRC 12207 / NCIMB 9602 / P101) (Thermoactinomyces viridis).